The sequence spans 207 residues: 23 kDa calcium-binding protein (207 aa).

The residue at position 1 (M1) is a Blocked amino end (Met). EF-hand domains follow at residues 17 to 52 (AKLD…TFEN), 60 to 95 (VTAD…CLKK), 119 to 154 (MKLD…TYKQ), and 161 to 196 (PTEA…GLKK). Ca(2+)-binding residues include D30, N32, N34, T36, E41, D73, D75, N77, E84, D132, D134, S136, Q138, E143, D174, D176, N178, T180, and E185.

Expected to play a crucial role in calcium-dependent regulation of ciliary movement. The chain is 23 kDa calcium-binding protein from Tetrahymena thermophila.